The primary structure comprises 609 residues: Putative cell agglutination protein pfl4 (609 aa).

An N-terminal signal peptide occupies residues 1-21; that stretch reads MLFLRFFIFTFFTSIFTVVVS. Residue Asn-75 is glycosylated (N-linked (GlcNAc...) asparagine). A 9 X 36 AA approximate tandem repeats region spans residues 75 to 391; that stretch reads NHSTIYTTIN…ASTVVVIPTA (317 aa). Tandem repeats lie at residues 77 to 110, 111 to 146, 147 to 182, 183 to 218, 219 to 254, 255 to 290, 291 to 325, 326 to 361, and 362 to 391. An N-linked (GlcNAc...) asparagine glycan is attached at Asn-161. Residues 427–589 form the PA14 domain; the sequence is FTQPAYFGSS…NSYNPTSYAY (163 aa).

Belongs to the mam3/map4 family.

It localises to the cell surface. In terms of biological role, may be involved in agglutination during conjugation or other aspects of colony formation. Induces flocculation when overexpressed. The sequence is that of Putative cell agglutination protein pfl4 from Schizosaccharomyces pombe (strain 972 / ATCC 24843) (Fission yeast).